We begin with the raw amino-acid sequence, 83 residues long: Cytochrome b559 subunit alpha (83 aa).

A helical membrane pass occupies residues 21-35 (VIHSITIPSLFIAGW). A heme-binding site is contributed by histidine 23.

The protein belongs to the PsbE/PsbF family. Heterodimer of an alpha subunit and a beta subunit. PSII is composed of 1 copy each of membrane proteins PsbA, PsbB, PsbC, PsbD, PsbE, PsbF, PsbH, PsbI, PsbJ, PsbK, PsbL, PsbM, PsbT, PsbX, PsbY, PsbZ, Psb30/Ycf12, at least 3 peripheral proteins of the oxygen-evolving complex and a large number of cofactors. It forms dimeric complexes. Heme b serves as cofactor.

The protein localises to the plastid. Its subcellular location is the chloroplast thylakoid membrane. This b-type cytochrome is tightly associated with the reaction center of photosystem II (PSII). PSII is a light-driven water:plastoquinone oxidoreductase that uses light energy to abstract electrons from H(2)O, generating O(2) and a proton gradient subsequently used for ATP formation. It consists of a core antenna complex that captures photons, and an electron transfer chain that converts photonic excitation into a charge separation. The sequence is that of Cytochrome b559 subunit alpha from Chlorella vulgaris (Green alga).